The chain runs to 389 residues: Major outer membrane porin (389 aa).

A signal peptide spans 1-22 (MKKLLKSALLFAATGSALSLQA).

It belongs to the chlamydial porin (CP) (TC 1.B.2) family. Part of a disulfide cross-linked outer membrane complex (COMC) composed of the major outer membrane porin (MOMP), the small cysteine-rich protein (OmcA) and the large cysteine-rich periplasmic protein (OmcB).

It is found in the cell outer membrane. In elementary bodies (EBs, the infectious stage, which is able to survive outside the host cell) provides the structural integrity of the outer envelope through disulfide cross-links with the small cysteine-rich protein and the large cysteine-rich periplasmic protein. It has been described in publications as the Sarkosyl-insoluble COMC (Chlamydia outer membrane complex), and serves as the functional equivalent of peptidoglycan. Functionally, permits diffusion of specific solutes through the outer membrane. This Chlamydia abortus (strain DSM 27085 / S26/3) (Chlamydophila abortus) protein is Major outer membrane porin (ompA).